Here is a 371-residue protein sequence, read N- to C-terminus: Aspartate-semialdehyde dehydrogenase (371 aa).

NADP(+)-binding positions include 11-14 (RGMV), 38-39 (TS), and glutamine 75. Arginine 104 is a phosphate binding site. The active-site Acyl-thioester intermediate is the cysteine 137. Glutamine 164 lines the substrate pocket. 167–168 (SG) contributes to the NADP(+) binding site. Residue glutamate 243 coordinates substrate. Lysine 246 contacts phosphate. Arginine 269 serves as a coordination point for substrate. Histidine 276 functions as the Proton acceptor in the catalytic mechanism. NADP(+) is bound at residue glutamine 352.

It belongs to the aspartate-semialdehyde dehydrogenase family. As to quaternary structure, homodimer.

It carries out the reaction L-aspartate 4-semialdehyde + phosphate + NADP(+) = 4-phospho-L-aspartate + NADPH + H(+). It functions in the pathway amino-acid biosynthesis; L-lysine biosynthesis via DAP pathway; (S)-tetrahydrodipicolinate from L-aspartate: step 2/4. Its pathway is amino-acid biosynthesis; L-methionine biosynthesis via de novo pathway; L-homoserine from L-aspartate: step 2/3. The protein operates within amino-acid biosynthesis; L-threonine biosynthesis; L-threonine from L-aspartate: step 2/5. Functionally, catalyzes the NADPH-dependent formation of L-aspartate-semialdehyde (L-ASA) by the reductive dephosphorylation of L-aspartyl-4-phosphate. In Buchnera aphidicola subsp. Schizaphis graminum (strain Sg), this protein is Aspartate-semialdehyde dehydrogenase.